Here is a 156-residue protein sequence, read N- to C-terminus: Small ribosomal subunit protein uS7 (156 aa).

Belongs to the universal ribosomal protein uS7 family. Part of the 30S ribosomal subunit. Contacts proteins S9 and S11.

Functionally, one of the primary rRNA binding proteins, it binds directly to 16S rRNA where it nucleates assembly of the head domain of the 30S subunit. Is located at the subunit interface close to the decoding center, probably blocks exit of the E-site tRNA. This chain is Small ribosomal subunit protein uS7, found in Shewanella sp. (strain MR-7).